Here is a 108-residue protein sequence, read N- to C-terminus: Anti-sigma-B factor antagonist (108 aa).

The STAS domain occupies 3-108 (LNIETITHDD…MHVNEGTEVE (106 aa)). The residue at position 57 (serine 57) is a Phosphoserine.

It belongs to the anti-sigma-factor antagonist family. In terms of processing, phosphorylated by RsbW on a serine residue.

Functionally, positive regulator of sigma-B activity. Non-phosphorylated RsbV binds to RsbW, preventing its association with sigma-B. When phosphorylated, releases RsbW, which is then free to complex with and inactivate sigma-B. The polypeptide is Anti-sigma-B factor antagonist (rsbV) (Staphylococcus epidermidis).